The following is a 428-amino-acid chain: D-amino acid dehydrogenase (428 aa).

An FAD-binding site is contributed by 3 to 17; that stretch reads VVVLGSGVVGVASAY.

The protein belongs to the DadA oxidoreductase family. FAD serves as cofactor.

The catalysed reaction is a D-alpha-amino acid + A + H2O = a 2-oxocarboxylate + AH2 + NH4(+). It functions in the pathway amino-acid degradation; D-alanine degradation; NH(3) and pyruvate from D-alanine: step 1/1. Its function is as follows. Oxidative deamination of D-amino acids. The chain is D-amino acid dehydrogenase from Burkholderia ambifaria (strain MC40-6).